A 96-amino-acid polypeptide reads, in one-letter code: Nucleoid-associated protein CCA_00330 (96 aa).

It belongs to the YbaB/EbfC family. In terms of assembly, homodimer.

The protein localises to the cytoplasm. Its subcellular location is the nucleoid. Binds to DNA and alters its conformation. May be involved in regulation of gene expression, nucleoid organization and DNA protection. In Chlamydia caviae (strain ATCC VR-813 / DSM 19441 / 03DC25 / GPIC) (Chlamydophila caviae), this protein is Nucleoid-associated protein CCA_00330.